We begin with the raw amino-acid sequence, 175 residues long: Urease accessory protein UreE (175 aa).

A disordered region spans residues 151–175; it reads GGAYGGSPSHAHRHSHVHSHSHETP. The segment covering 160–169 has biased composition (basic residues); that stretch reads HAHRHSHVHS.

The protein belongs to the UreE family.

The protein resides in the cytoplasm. Involved in urease metallocenter assembly. Binds nickel. Probably functions as a nickel donor during metallocenter assembly. The protein is Urease accessory protein UreE of Synechococcus sp. (strain WH7805).